The primary structure comprises 122 residues: MIQMQTNLDVADNSGARRVMCIKVLGGSKRKYASIGDVIVVSIKEAIPRGRVKKGDVMKAVVVRTAKDIRRADGSVIRFDTNAAVLIDNKKEPIGTRIFGPVPRELRAKNHMKIISLAPEVL.

The protein belongs to the universal ribosomal protein uL14 family. Part of the 50S ribosomal subunit. Forms a cluster with proteins L3 and L19. In the 70S ribosome, L14 and L19 interact and together make contacts with the 16S rRNA in bridges B5 and B8.

In terms of biological role, binds to 23S rRNA. Forms part of two intersubunit bridges in the 70S ribosome. The sequence is that of Large ribosomal subunit protein uL14 from Rhizobium johnstonii (strain DSM 114642 / LMG 32736 / 3841) (Rhizobium leguminosarum bv. viciae).